The primary structure comprises 227 residues: MPSGDASADPIEARFDPAAMPARMAAALDAMRLGIPVVVLDDADRENEADLIIAADRLTHAGMAMLIRECSGIVCLCLTAEKAAVLGLRPMVEHNRSQYGTAFTVSIEARVGVSTGVSAADRITTIRAAVAPDADAQSVVSPGHVFPLVAQAGGVLARRGHTEGSVDLARLAGLSPAGVLCELMLPDGTMARRDDAVRFADQHGLPVLTIEDIARYREQMARAVSFA.

Residues 45–46 (RE), D50, 158–162 (RRGHT), and E182 contribute to the D-ribulose 5-phosphate site. E46 provides a ligand contact to Mg(2+). H161 serves as a coordination point for Mg(2+).

It belongs to the DHBP synthase family. In terms of assembly, homodimer. It depends on Mg(2+) as a cofactor. Requires Mn(2+) as cofactor.

The catalysed reaction is D-ribulose 5-phosphate = (2S)-2-hydroxy-3-oxobutyl phosphate + formate + H(+). It participates in cofactor biosynthesis; riboflavin biosynthesis; 2-hydroxy-3-oxobutyl phosphate from D-ribulose 5-phosphate: step 1/1. Functionally, catalyzes the conversion of D-ribulose 5-phosphate to formate and 3,4-dihydroxy-2-butanone 4-phosphate. The sequence is that of 3,4-dihydroxy-2-butanone 4-phosphate synthase from Ralstonia nicotianae (strain ATCC BAA-1114 / GMI1000) (Ralstonia solanacearum).